The following is a 217-amino-acid chain: FMN-dependent NADH:quinone oxidoreductase (217 aa).

FMN contacts are provided by residues S10 and 16 to 18 (SVS).

It belongs to the azoreductase type 1 family. In terms of assembly, homodimer. It depends on FMN as a cofactor.

It catalyses the reaction 2 a quinone + NADH + H(+) = 2 a 1,4-benzosemiquinone + NAD(+). The catalysed reaction is N,N-dimethyl-1,4-phenylenediamine + anthranilate + 2 NAD(+) = 2-(4-dimethylaminophenyl)diazenylbenzoate + 2 NADH + 2 H(+). In terms of biological role, quinone reductase that provides resistance to thiol-specific stress caused by electrophilic quinones. Also exhibits azoreductase activity. Catalyzes the reductive cleavage of the azo bond in aromatic azo compounds to the corresponding amines. This chain is FMN-dependent NADH:quinone oxidoreductase, found in Polaromonas naphthalenivorans (strain CJ2).